Consider the following 329-residue polypeptide: MHPQQLVIAWLSLVLLAPPLMAIWELEKNVYVVELDWHPDAPGEMVVLTCNTPEEDDITWTSDQSSEVLGSGKTLTIQVKEFADAGQYTCHKGGEVLSHSFLLIHKKEDGIWSTDILREQKESKNKIFLKCEAKNYSGRFTCWWLTAISTDLKFTVKSSRGSSDPQEVTCGAATLSAEKVRVDNRDYKKYTVECQEGSACPAAEESLPIEVVVDAIHKLKYENYTSSFFIRDIIKPDPPKNLQLKPLKNSRHVEVSWEYPDTWSTPHSYFSLTFGVQVQGKNNREKKDRLSVDKTSAKVVCHKDAKIRVQARDRYYSSSWSNWASVSCS.

An N-terminal signal peptide occupies residues 1–22; sequence MHPQQLVIAWLSLVLLAPPLMA. Positions 23 to 106 constitute an Ig-like C2-type domain; sequence IWELEKNVYV…LSHSFLLIHK (84 aa). C50 and C90 are disulfide-bonded. N-linked (GlcNAc...) asparagine glycosylation is found at N135 and N223. The 92-residue stretch at 238-329 folds into the Fibronectin type-III domain; the sequence is PPKNLQLKPL…WSNWASVSCS (92 aa).

This sequence belongs to the IL-12B family. As to quaternary structure, heterodimer with IL12A; disulfide-linked. The heterodimer is known as interleukin IL-12. Heterodimer with IL23A; disulfide-linked. The heterodimer is known as interleukin IL-23. Also secreted as a monomer. Interacts with NBR1; this interaction promotes IL-12 secretion.

It is found in the secreted. Its function is as follows. Cytokine that can act as a growth factor for activated T and NK cells, enhance the lytic activity of NK/lymphokine-activated killer cells, and stimulate the production of IFN-gamma by resting PBMC. Associates with IL23A to form the IL-23 interleukin, a heterodimeric cytokine which functions in innate and adaptive immunity. IL-23 may constitute with IL-17 an acute response to infection in peripheral tissues. IL-23 binds to a heterodimeric receptor complex composed of IL12RB1 and IL23R, activates the Jak-Stat signaling cascade, stimulates memory rather than naive T-cells and promotes production of pro-inflammatory cytokines. IL-23 induces autoimmune inflammation and thus may be responsible for autoimmune inflammatory diseases and may be important for tumorigenesis. In Felis catus (Cat), this protein is Interleukin-12 subunit beta (IL12B).